The following is a 462-amino-acid chain: tRNA modification GTPase MnmE (462 aa).

(6S)-5-formyl-5,6,7,8-tetrahydrofolate-binding residues include Arg23, Glu88, and Arg127. A TrmE-type G domain is found at 224 to 383 (GLATVIIGRP…LEKAIADLFF (160 aa)). Asn234 serves as a coordination point for K(+). Residues 234-239 (NVGKSS), 253-259 (TDIPGTT), and 278-281 (DTAG) each bind GTP. Position 238 (Ser238) interacts with Mg(2+). K(+) is bound by residues Thr253, Ile255, and Thr258. Position 259 (Thr259) interacts with Mg(2+). Lys462 is a binding site for (6S)-5-formyl-5,6,7,8-tetrahydrofolate.

This sequence belongs to the TRAFAC class TrmE-Era-EngA-EngB-Septin-like GTPase superfamily. TrmE GTPase family. As to quaternary structure, homodimer. Heterotetramer of two MnmE and two MnmG subunits. K(+) serves as cofactor.

It is found in the cytoplasm. Functionally, exhibits a very high intrinsic GTPase hydrolysis rate. Involved in the addition of a carboxymethylaminomethyl (cmnm) group at the wobble position (U34) of certain tRNAs, forming tRNA-cmnm(5)s(2)U34. The protein is tRNA modification GTPase MnmE of Geobacillus kaustophilus (strain HTA426).